The chain runs to 59 residues: Large ribosomal subunit protein bL32 (59 aa).

2 disordered regions span residues 1–23 (MAVQQNKKSPSKRGMHRSHDFLT) and 35–59 (EVHLRHHVSPNGYYRGKKVVKTKND). The span at 49 to 59 (RGKKVVKTKND) shows a compositional bias: basic residues.

The protein belongs to the bacterial ribosomal protein bL32 family.

The chain is Large ribosomal subunit protein bL32 from Burkholderia ambifaria (strain MC40-6).